A 145-amino-acid polypeptide reads, in one-letter code: D-aminoacyl-tRNA deacylase (145 aa).

Positions 137-138 (GP) match the Gly-cisPro motif, important for rejection of L-amino acids motif.

It belongs to the DTD family. As to quaternary structure, homodimer.

It is found in the cytoplasm. It catalyses the reaction glycyl-tRNA(Ala) + H2O = tRNA(Ala) + glycine + H(+). The enzyme catalyses a D-aminoacyl-tRNA + H2O = a tRNA + a D-alpha-amino acid + H(+). An aminoacyl-tRNA editing enzyme that deacylates mischarged D-aminoacyl-tRNAs. Also deacylates mischarged glycyl-tRNA(Ala), protecting cells against glycine mischarging by AlaRS. Acts via tRNA-based rather than protein-based catalysis; rejects L-amino acids rather than detecting D-amino acids in the active site. By recycling D-aminoacyl-tRNA to D-amino acids and free tRNA molecules, this enzyme counteracts the toxicity associated with the formation of D-aminoacyl-tRNA entities in vivo and helps enforce protein L-homochirality. This is D-aminoacyl-tRNA deacylase from Pseudomonas fluorescens (strain SBW25).